The following is a 396-amino-acid chain: 1-deoxy-D-xylulose 5-phosphate reductoisomerase (396 aa).

Residues threonine 13, glycine 14, serine 15, isoleucine 16, and asparagine 127 each contribute to the NADPH site. Lysine 128 contacts 1-deoxy-D-xylulose 5-phosphate. Glutamate 129 serves as a coordination point for NADPH. Aspartate 153 serves as a coordination point for Mn(2+). 1-deoxy-D-xylulose 5-phosphate-binding residues include serine 154, glutamate 155, serine 184, and histidine 207. A Mn(2+)-binding site is contributed by glutamate 155. Glycine 213 contributes to the NADPH binding site. The 1-deoxy-D-xylulose 5-phosphate site is built by serine 220, asparagine 225, lysine 226, and glutamate 229. Glutamate 229 serves as a coordination point for Mn(2+).

This sequence belongs to the DXR family. It depends on Mg(2+) as a cofactor. Mn(2+) serves as cofactor.

The catalysed reaction is 2-C-methyl-D-erythritol 4-phosphate + NADP(+) = 1-deoxy-D-xylulose 5-phosphate + NADPH + H(+). It participates in isoprenoid biosynthesis; isopentenyl diphosphate biosynthesis via DXP pathway; isopentenyl diphosphate from 1-deoxy-D-xylulose 5-phosphate: step 1/6. Functionally, catalyzes the NADPH-dependent rearrangement and reduction of 1-deoxy-D-xylulose-5-phosphate (DXP) to 2-C-methyl-D-erythritol 4-phosphate (MEP). The polypeptide is 1-deoxy-D-xylulose 5-phosphate reductoisomerase (Pseudomonas savastanoi pv. phaseolicola (strain 1448A / Race 6) (Pseudomonas syringae pv. phaseolicola (strain 1448A / Race 6))).